The chain runs to 34 residues: Photosystem II reaction center protein M (34 aa).

Residues G7–I27 form a helical membrane-spanning segment.

The protein belongs to the PsbM family. PSII is composed of 1 copy each of membrane proteins PsbA, PsbB, PsbC, PsbD, PsbE, PsbF, PsbH, PsbI, PsbJ, PsbK, PsbL, PsbM, PsbT, PsbX, PsbY, PsbZ, Psb30/Ycf12, peripheral proteins PsbO, CyanoQ (PsbQ), PsbU, PsbV and a large number of cofactors. It forms dimeric complexes.

The protein localises to the cellular thylakoid membrane. One of the components of the core complex of photosystem II (PSII). PSII is a light-driven water:plastoquinone oxidoreductase that uses light energy to abstract electrons from H(2)O, generating O(2) and a proton gradient subsequently used for ATP formation. It consists of a core antenna complex that captures photons, and an electron transfer chain that converts photonic excitation into a charge separation. This subunit is found at the monomer-monomer interface. The chain is Photosystem II reaction center protein M from Synechococcus sp. (strain CC9605).